The chain runs to 300 residues: NAD kinase (300 aa).

Asp75 acts as the Proton acceptor in catalysis. Residues Asp75–Gly76, Asn149–Asp150, Arg177, Asp179, Thr190–Ser195, Ala214, and Gln248 contribute to the NAD(+) site.

Belongs to the NAD kinase family. A divalent metal cation serves as cofactor.

Its subcellular location is the cytoplasm. It carries out the reaction NAD(+) + ATP = ADP + NADP(+) + H(+). Involved in the regulation of the intracellular balance of NAD and NADP, and is a key enzyme in the biosynthesis of NADP. Catalyzes specifically the phosphorylation on 2'-hydroxyl of the adenosine moiety of NAD to yield NADP. This Burkholderia multivorans (strain ATCC 17616 / 249) protein is NAD kinase.